The chain runs to 565 residues: NAD-dependent malic enzyme (565 aa).

Y104 serves as the catalytic Proton donor. NAD(+) is bound at residue R157. K175 serves as the catalytic Proton acceptor. E246, D247, and D270 together coordinate a divalent metal cation. NAD(+) is bound by residues D270 and N418.

This sequence belongs to the malic enzymes family. In terms of assembly, homotetramer. The cofactor is Mg(2+). Requires Mn(2+) as cofactor.

The enzyme catalyses (S)-malate + NAD(+) = pyruvate + CO2 + NADH. It catalyses the reaction oxaloacetate + H(+) = pyruvate + CO2. This chain is NAD-dependent malic enzyme, found in Erwinia tasmaniensis (strain DSM 17950 / CFBP 7177 / CIP 109463 / NCPPB 4357 / Et1/99).